The primary structure comprises 123 residues: Methicillin resistance regulatory protein MecI (123 aa).

Residues 7–71 (EISSAEWEFM…KDNKIFQYYS (65 aa)) constitute a DNA-binding region (H-T-H motif). Residues 74–123 (EESDIKYKTSKNFINKVYKGGFNSLVLNFVEKEDLSQDEIEELRNILNKK) form an important for dimerization region.

This sequence belongs to the BlaI transcriptional regulatory family. In terms of assembly, monomer and homodimer. In terms of processing, upon exposure to beta-lactams, proteolytic cleavage at a single site impairs dimerization and abolishes repressor activity.

It localises to the cytoplasm. Transcriptional repressor that constitutively blocks the transcription of the gene for the penicillin-binding protein MecA. Binds DNA as a dimer. In Staphylococcus aureus (strain Mu50 / ATCC 700699), this protein is Methicillin resistance regulatory protein MecI (mecI).